The following is a 214-amino-acid chain: Ras-like protein 2 (214 aa).

GTP contacts are provided by residues 19–24 (GVGKSC), 35–41 (VDEYDPT), 65–66 (AG), 122–125 (NKCD), and 152–154 (SAK). The Effector region motif lies at 38–46 (YDPTIEDSY). The segment at 178 to 197 (QGYSTGSGGSNAGGPSNKME) is disordered. Cysteine 211 is subject to Cysteine methyl ester. Cysteine 211 carries the S-farnesyl cysteine lipid modification. A propeptide spans 212 to 214 (VLM) (removed in mature form).

The protein belongs to the small GTPase superfamily. Ras family. Interacts with farnesyltransferase beta subunit RAM1.

Its subcellular location is the cell membrane. Alternates between an inactive form bound to GDP and an active form bound to GTP. Activated by a guanine nucleotide-exchange factor (GEF) and inactivated by a GTPase-activating protein (GAP). Its function is as follows. Modulates the activity of the adenylate cyclase catalytic subunit and therefore affects the biosynthesis of cyclic-AMP. Plays a role in both surface attachment and surface recognition of appressoria, a highly specialized infection structure for plant penetration. Regulates appressorium formation by coordinated regulation of cAMP signaling and Pmk1 MAPK pathways. This Pyricularia oryzae (strain 70-15 / ATCC MYA-4617 / FGSC 8958) (Rice blast fungus) protein is Ras-like protein 2.